Reading from the N-terminus, the 474-residue chain is Probable multidrug resistance protein NorM (474 aa).

12 helical membrane passes run 33-50 (LWLA…IAMM), 65-87 (VAAA…GLVS), 108-130 (SLRV…QLYG), 150-172 (YLDG…GLMG), 179-201 (PALW…LIHG), 211-233 (FGAG…VVCV), 258-280 (LLQL…GAAA), 295-317 (QIAL…AATV), 334-356 (AGFA…VALT), 376-398 (TLTA…QVVA), 410-432 (VPLL…VLGF), and 436-458 (LGPF…LLVW).

This sequence belongs to the multi antimicrobial extrusion (MATE) (TC 2.A.66.1) family.

Its subcellular location is the cell inner membrane. In terms of biological role, multidrug efflux pump. The protein is Probable multidrug resistance protein NorM (norM) of Rhodopseudomonas palustris (strain ATCC BAA-98 / CGA009).